Consider the following 150-residue polypeptide: UPF0735 ACT domain-containing protein DSY2247 (150 aa).

Residues Thr74–Gln149 enclose the ACT domain.

This sequence belongs to the UPF0735 family.

This is UPF0735 ACT domain-containing protein DSY2247 from Desulfitobacterium hafniense (strain Y51).